A 417-amino-acid chain; its full sequence is Phosphoglycerate kinase (417 aa).

Residues valine 23, aspartate 24, phenylalanine 25, asparagine 26, glutamine 39, arginine 40, serine 63, histidine 64, glycine 66, arginine 67, leucine 122, arginine 123, histidine 170, and arginine 171 each coordinate (2R)-3-phosphoglycerate. Glycine 214 provides a ligand contact to ADP. Glycine 214 serves as a coordination point for CDP. AMP-binding residues include alanine 215 and lysine 216. Alanine 215 is a binding site for ATP. Residue alanine 215 coordinates Mg(2+). Aspartate 219 is a CDP binding site. Mg(2+) is bound at residue aspartate 219. Lysine 220 is a binding site for AMP. Residue lysine 220 coordinates ATP. Glycine 238 is a binding site for ADP. Position 238 (glycine 238) interacts with CDP. AMP-binding residues include glycine 239 and glycine 313. ATP is bound by residues glycine 239 and glycine 313. The CDP site is built by glycine 338 and phenylalanine 343. Residue phenylalanine 343 coordinates ADP. Glutamate 344 contributes to the AMP binding site. ATP contacts are provided by glutamate 344, aspartate 375, and threonine 376. Aspartate 375 is a Mg(2+) binding site.

It belongs to the phosphoglycerate kinase family. Monomer. Mg(2+) is required as a cofactor.

The protein localises to the cytoplasm. The protein resides in the mitochondrion. The catalysed reaction is (2R)-3-phosphoglycerate + ATP = (2R)-3-phospho-glyceroyl phosphate + ADP. It participates in carbohydrate degradation; glycolysis; pyruvate from D-glyceraldehyde 3-phosphate: step 2/5. Catalyzes one of the two ATP producing reactions in the glycolytic pathway via the reversible conversion of 1,3-diphosphoglycerate to 3-phosphoglycerate. Both L- and D- forms of purine and pyrimidine nucleotides can be used as substrates, but the activity is much lower on pyrimidines. Negatively regulates the biosynthesis of acetyl-CoA from pyruvate in the mitochondrion. In Penicillium citrinum, this protein is Phosphoglycerate kinase (PGKA).